Reading from the N-terminus, the 196-residue chain is MSAAAPRLVVGLGNPGAEYTETRHNAGFRFCERLADKLGVRFSHESRFHGFVANARDAGVWLLMPQTYMNRSGQAVGALARFYRIAPAEILVVHDELDIPPGQLRLKFGGGLGGHNGLKDTSAHLATNDYWRLRIGIGHPGDRNEVVNYVLKPARREEQGQIDEALDRALAAWPMIARGEWNAATTRLNARPAALK.

Tyr19 contacts tRNA. Catalysis depends on His24, which acts as the Proton acceptor. 3 residues coordinate tRNA: Tyr68, Asn70, and Asn116.

Belongs to the PTH family. Monomer.

Its subcellular location is the cytoplasm. It carries out the reaction an N-acyl-L-alpha-aminoacyl-tRNA + H2O = an N-acyl-L-amino acid + a tRNA + H(+). Its function is as follows. Hydrolyzes ribosome-free peptidyl-tRNAs (with 1 or more amino acids incorporated), which drop off the ribosome during protein synthesis, or as a result of ribosome stalling. In terms of biological role, catalyzes the release of premature peptidyl moieties from peptidyl-tRNA molecules trapped in stalled 50S ribosomal subunits, and thus maintains levels of free tRNAs and 50S ribosomes. The sequence is that of Peptidyl-tRNA hydrolase from Aromatoleum aromaticum (strain DSM 19018 / LMG 30748 / EbN1) (Azoarcus sp. (strain EbN1)).